Consider the following 234-residue polypeptide: uncharacterized protein (234 aa).

The tract at residues 62-99 (NEESISDLNSDNPGNSEPSDVESFVLSDEDENSEKDFS) is disordered. A compositionally biased stretch (polar residues) spans 67-79 (SDLNSDNPGNSEP).

This is an uncharacterized protein from Acanthamoeba polyphaga (Amoeba).